The sequence spans 837 residues: Tuftelin-interacting protein 11 (837 aa).

Basic and acidic residues-rich tracts occupy residues 1 to 13 and 44 to 64; these read MSLS…GEGH and QTKE…EERP. Disordered regions lie at residues 1-21, 34-73, and 85-135; these read MSLS…DDER, EFNP…RARD, and LKKG…FAGG. The segment at 1-50 is required for interaction with DHX15; it reads MSLSHLYRDGEGHLDDDDDERENFEITDWDLQNEFNPNRQRHWQTKEEAT. A phosphoserine mark is found at serine 2, serine 59, serine 95, and serine 98. A compositionally biased stretch (acidic residues) spans 91–100; sequence EEADSEDSDA. Basic and acidic residues predominate over residues 101–116; that stretch reads EEKPVKQEDFPKDLGP. Serine 144 is subject to Phosphoserine. The G-patch domain maps to 149 to 195; that stretch reads TKGIGQKLLQKMGYVPGRGLGKNAQGIINPIEAKQRKGKGAVGAYGS. Positions 183 to 236 are disordered; the sequence is QRKGKGAVGAYGSERTTQSLQDFPVADSEEEAEEEFQKELSQWRKDPSGSKKKP. Serine 210 bears the Phosphoserine mark. Residues 217-231 show a composition bias toward basic and acidic residues; sequence EFQKELSQWRKDPSG. A Nuclear localization signal motif is present at residues 700-705; it reads VKDKFN. Residues 710–734 form a required for nuclear speckle localization region; that stretch reads IMNRAVSSNVGAYMQPGARENIAYL.

This sequence belongs to the TFP11/STIP family. In terms of assembly, identified in the spliceosome C complex. Found in the Intron Large (IL) complex, a post-mRNA release spliceosomal complex containing the excised intron, U2, U5 and U6 snRNPs, and splicing factors. Interacts with TUFT1. Interacts with DHX15; indicative for a recruitment of DHX15 to the IL complex. Interacts with GCFC2.

The protein localises to the cytoplasm. Its subcellular location is the nucleus. Its function is as follows. Involved in pre-mRNA splicing, specifically in spliceosome disassembly during late-stage splicing events. Intron turnover seems to proceed through reactions in two lariat-intron associated complexes termed Intron Large (IL) and Intron Small (IS). In cooperation with DHX15 seems to mediate the transition of the U2, U5 and U6 snRNP-containing IL complex to the snRNP-free IS complex leading to efficient debranching and turnover of excised introns. May play a role in the differentiation of ameloblasts and odontoblasts or in the forming of the enamel extracellular matrix. This Rattus norvegicus (Rat) protein is Tuftelin-interacting protein 11 (Tfip11).